Consider the following 431-residue polypeptide: Gamma-glutamyl phosphate reductase (431 aa).

It belongs to the gamma-glutamyl phosphate reductase family.

It is found in the cytoplasm. It carries out the reaction L-glutamate 5-semialdehyde + phosphate + NADP(+) = L-glutamyl 5-phosphate + NADPH + H(+). It participates in amino-acid biosynthesis; L-proline biosynthesis; L-glutamate 5-semialdehyde from L-glutamate: step 2/2. Catalyzes the NADPH-dependent reduction of L-glutamate 5-phosphate into L-glutamate 5-semialdehyde and phosphate. The product spontaneously undergoes cyclization to form 1-pyrroline-5-carboxylate. The protein is Gamma-glutamyl phosphate reductase of Beijerinckia indica subsp. indica (strain ATCC 9039 / DSM 1715 / NCIMB 8712).